The sequence spans 2128 residues: Non-reducing polyketide synthase albA (2128 aa).

Positions 8–244 (YLFGDQTSDI…VKAPIHGPYH (237 aa)) are N-terminal acylcarrier protein transacylase domain (SAT). The Ketosynthase family 3 (KS3) domain occupies 375–806 (NSKIAIIGMS…GGNTALLLED (432 aa)). Catalysis depends on for beta-ketoacyl synthase activity residues Cys-547, His-682, and His-724. The interval 912 to 1232 (FVFTGQGAQY…LASLHLAGID (321 aa)) is malonyl-CoA:ACP transacylase (MAT) domain. Residue Ser-1001 is the For acyl/malonyl transferase activity of the active site. Residues 1286–1425 (HEYLTTAAQK…CTVRFFDCAA (140 aa)) form an N-terminal hotdog fold region. Residues 1286 to 1598 (HEYLTTAAQK…FQALSRKILD (313 aa)) enclose the PKS/mFAS DH domain. The tract at residues 1290–1603 (TTAAQKVIET…RKILDTVLPP (314 aa)) is product template (PT) domain. The Proton acceptor; for dehydratase activity role is filled by His-1326. The segment at 1452–1598 (DAHRLGRGMV…FQALSRKILD (147 aa)) is C-terminal hotdog fold. Asp-1511 functions as the Proton donor; for dehydratase activity in the catalytic mechanism. The Carrier 1 domain maps to 1618 to 1695 (PSAPSLVKRA…DFKQFLAPMS (78 aa)). An O-(pantetheine 4'-phosphoryl)serine modification is found at Ser-1655. Residues 1695 to 1740 (SQGEASDGSTSDPESSSSFNGGSSTDESSAGSPVSSPPNEKVTQVE) are disordered. Low complexity predominate over residues 1700 to 1723 (SDGSTSDPESSSSFNGGSSTDESS). The segment covering 1724-1740 (AGSPVSSPPNEKVTQVE) has biased composition (polar residues). The Carrier 2 domain occupies 1739 to 1816 (VEQHATIKEI…DVEDALGLKP (78 aa)). Residue Ser-1776 is modified to O-(pantetheine 4'-phosphoryl)serine. Residues 1854–2126 (SPHPRSTSIL…ELGSFIGNAM (273 aa)) are claisen cyclase domain. Ser-1944 (for Claisen cyclase activity) is an active-site residue.

It catalyses the reaction 6 malonyl-CoA + acetyl-CoA + 6 H(+) = naphtopyrone YWA1 + 6 CO2 + 7 CoA + H2O. Its pathway is secondary metabolite biosynthesis. In terms of biological role, non-reducing polyketide synthase; part of the gene cluster that mediates the biosynthesis of aurasperone B, a dimeric gamma-naphthopyrone. The first step in the biosynthesis of aurasperone B is the production of gamma-naphthopyrone precursor YWA1 by the non-reducing polyketide synthase albA, via condensation of one acetyl-CoA starter unit with 6 malonyl-CoA units. YWA1 is then methylated by aunE at position C-6 to yield foncesin which is further methylated at position C-8 by aunD to produce fonsecin B. A key enzyme in the biosynthetic pathway is the cytochrome P450 monooxygenase aunB which catalyzes the oxidative dimerization of fonsecin B to aurasperone B. AunB also catalyzes the oxidative dimerization of rubrofusarin B into aurasperone A. The polypeptide is Non-reducing polyketide synthase albA (Aspergillus niger (strain ATCC 1015 / CBS 113.46 / FGSC A1144 / LSHB Ac4 / NCTC 3858a / NRRL 328 / USDA 3528.7)).